Consider the following 273-residue polypeptide: Peptide deformylase 1B, chloroplastic/mitochondrial (273 aa).

The N-terminal 56 residues, 1–56, are a transit peptide targeting the chloroplast and mitochondrion; it reads MAVCNCFLQAPPLSRILLPVLSRRATTLSAGYGRLKSTVTFCSTVNRTSPLTSSVR. Fe cation-binding residues include Cys171 and His213. Residue Glu214 is part of the active site. Position 217 (His217) interacts with Fe cation. Basic and acidic residues predominate over residues 246-261; that stretch reads YEEKTGLPSPERVEAR. The interval 246–273 is disordered; it reads YEEKTGLPSPERVEARQKRKAGVGFGKR. The span at 262 to 273 shows a compositional bias: basic residues; that stretch reads QKRKAGVGFGKR.

Belongs to the polypeptide deformylase family. Homodimer. Fe(2+) serves as cofactor. As to expression, expressed in leaves and flowers.

It localises to the plastid. The protein localises to the chloroplast stroma. It is found in the mitochondrion. The catalysed reaction is N-terminal N-formyl-L-methionyl-[peptide] + H2O = N-terminal L-methionyl-[peptide] + formate. With respect to regulation, inhibited by actinonin. Removes the formyl group from the N-terminal Met of newly synthesized proteins. Has a preferred substrate specificity towards the photosystem II (PS II) D1 polypeptide. This Arabidopsis thaliana (Mouse-ear cress) protein is Peptide deformylase 1B, chloroplastic/mitochondrial (PDF1B).